A 436-amino-acid chain; its full sequence is 3-ketoacyl-CoA thiolase (436 aa).

The active-site Acyl-thioester intermediate is Cys99. Residues His392 and Cys422 each act as proton acceptor in the active site.

This sequence belongs to the thiolase-like superfamily. Thiolase family. In terms of assembly, heterotetramer of two alpha chains (FadJ) and two beta chains (FadI).

It is found in the cytoplasm. The enzyme catalyses an acyl-CoA + acetyl-CoA = a 3-oxoacyl-CoA + CoA. The protein operates within lipid metabolism; fatty acid beta-oxidation. Its function is as follows. Catalyzes the final step of fatty acid oxidation in which acetyl-CoA is released and the CoA ester of a fatty acid two carbons shorter is formed. This chain is 3-ketoacyl-CoA thiolase, found in Shigella boydii serotype 18 (strain CDC 3083-94 / BS512).